The following is a 744-amino-acid chain: Polyadenylate-binding protein, cytoplasmic and nuclear (744 aa).

Residues 1–11 show a composition bias toward polar residues; it reads MSEVANSTSPV. The disordered stretch occupies residues 1 to 42; the sequence is MSEVANSTSPVQDGADANGAQINTNVPAASGDAPTPTTAAQQ. Positions 33-42 are enriched in low complexity; the sequence is APTPTTAAQQ. RRM domains follow at residues 48–126, 136–213, 229–306, and 332–462; these read ASLY…WSQR, GNVF…HHIP, TNIY…RAQK, and VNLY…LAQR. Disordered regions lie at residues 368-411, 527-550, 607-651, and 723-744; these read EEKK…AGDK, GRGAGFPGGMPGQQGGRGGPNAQQ, IAGG…PGVD, and VKNKEGDGEKEAPKEESKEEKA. The span at 376–397 shows a compositional bias: basic and acidic residues; it reads KEVKEEKKEDEKKEDEEAKEGS. Composition is skewed to gly residues over residues 527–545, 609–632, and 640–649; these read GRGAGFPGGMPGQQGGRGG, GGPGIRGGQGGFPQGGRGAPGGRG, and PQGGRPGGPG. A PABC domain is found at 647–724; the sequence is GPGVDMSVLS…AMSVYDEYVK (78 aa).

The protein belongs to the polyadenylate-binding protein type-1 family.

It localises to the cytoplasm. It is found in the nucleus. Functionally, binds the poly(A) tail of mRNA. Appears to be an important mediator of the multiple roles of the poly(A) tail in mRNA biogenesis, stability and translation. In the nucleus, involved in both mRNA cleavage and polyadenylation. Is also required for efficient mRNA export to the cytoplasm. Acts in concert with a poly(A)-specific nuclease (PAN) to affect poly(A) tail shortening, which may occur concomitantly with either nucleocytoplasmic mRNA transport or translational initiation. In the cytoplasm, stimulates translation initiation and regulates mRNA decay through translation termination-coupled poly(A) shortening, probably mediated by PAN. This chain is Polyadenylate-binding protein, cytoplasmic and nuclear (PAB1), found in Phaeosphaeria nodorum (strain SN15 / ATCC MYA-4574 / FGSC 10173) (Glume blotch fungus).